We begin with the raw amino-acid sequence, 202 residues long: GTP cyclohydrolase 1 (202 aa).

Residues Cys90, His93, and Cys163 each contribute to the Zn(2+) site.

This sequence belongs to the GTP cyclohydrolase I family. In terms of assembly, toroid-shaped homodecamer, composed of two pentamers of five dimers.

The enzyme catalyses GTP + H2O = 7,8-dihydroneopterin 3'-triphosphate + formate + H(+). It functions in the pathway cofactor biosynthesis; 7,8-dihydroneopterin triphosphate biosynthesis; 7,8-dihydroneopterin triphosphate from GTP: step 1/1. The chain is GTP cyclohydrolase 1 from Mycolicibacterium vanbaalenii (strain DSM 7251 / JCM 13017 / BCRC 16820 / KCTC 9966 / NRRL B-24157 / PYR-1) (Mycobacterium vanbaalenii).